Here is a 291-residue protein sequence, read N- to C-terminus: m-AAA protease-interacting protein 1, mitochondrial (291 aa).

A mitochondrion-targeting transit peptide spans 1–96; it reads MALAVRLLPR…TFPSCPRRTY (96 aa).

As to quaternary structure, interacts with AFG3L2. Interacts with SPG7. Interacts with SMDT1/EMRE (via the N-terminal transit peptide); interaction is direct and takes place before maturation of SMDT1/EMRE.

It localises to the mitochondrion matrix. In terms of biological role, promotes sorting of SMDT1/EMRE in mitochondria by ensuring its maturation. Interacts with the transit peptide region of SMDT1/EMRE precursor protein in the mitochondrial matrix, leading to protect it against protein degradation by YME1L1, thereby ensuring SMDT1/EMRE maturation by the mitochondrial processing peptidase (PMPCA and PMPCB). In Bos taurus (Bovine), this protein is m-AAA protease-interacting protein 1, mitochondrial.